Consider the following 224-residue polypeptide: MQNAEAAPALLAAHGLVGRRGGRRPLDLNLRPGQLVHVRGANGSGKTSLLRTLAGLLRPRRGEVRWNGADIHADLPGYYLHMAYLGHDNGCSDALTARENLRYALHVAGAPRAEPELERALRDWGLAAGADAPAARLSQGQGRRLALARVMLSRKRLWLLDEPDAGLDAASLQRLHGMLDAHLAGGGAAVLASHRGGGAWAGCTQTLELDEYAHAEVVGADCLA.

In terms of domain architecture, ABC transporter spans 1–220; the sequence is MQNAEAAPAL…EYAHAEVVGA (220 aa). 40-47 serves as a coordination point for ATP; sequence GANGSGKT.

It belongs to the ABC transporter superfamily. CcmA exporter (TC 3.A.1.107) family. As to quaternary structure, the complex is composed of two ATP-binding proteins (CcmA) and two transmembrane proteins (CcmB).

It localises to the cell inner membrane. The enzyme catalyses heme b(in) + ATP + H2O = heme b(out) + ADP + phosphate + H(+). Its function is as follows. Part of the ABC transporter complex CcmAB involved in the biogenesis of c-type cytochromes; once thought to export heme, this seems not to be the case, but its exact role is uncertain. Responsible for energy coupling to the transport system. This chain is Cytochrome c biogenesis ATP-binding export protein CcmA, found in Bordetella bronchiseptica (strain ATCC BAA-588 / NCTC 13252 / RB50) (Alcaligenes bronchisepticus).